The sequence spans 85 residues: MKMTLIAILTCAAVLVLHTTAAEELEAESQLMEVGMPDTELEAVDEERLFECSVSCEIEKEGNKDCKKKKCKGGWKCKFNMCVKV.

Positions 1-22 are cleaved as a signal peptide; sequence MKMTLIAILTCAAVLVLHTTAA. The propeptide occupies 23-48; the sequence is EELEAESQLMEVGMPDTELEAVDEER. 3 disulfides stabilise this stretch: Cys52-Cys66, Cys56-Cys77, and Cys71-Cys82.

It belongs to the neurotoxin 12 (Hwtx-2) family. 02 (Hwtx-2) subfamily. As to quaternary structure, monomer. In terms of tissue distribution, expressed by the venom gland.

It localises to the secreted. Neurotoxin active on both insects and mammals. This is U4-theraphotoxin-Hhn1a from Cyriopagopus hainanus (Chinese bird spider).